The sequence spans 538 residues: Spindle pole body protein CSA6 (538 aa).

Disordered regions lie at residues 1-31 and 57-129; these read MEDSTEDIIKSFTLEQSPEIKPKPKSKTSDL and QNIS…KYQD. Basic and acidic residues-rich tracts occupy residues 18–30 and 57–68; these read PEIKPKPKSKTSD and QNISDSEHDLTP. 2 stretches are compositionally biased toward polar residues: residues 86–96 and 104–122; these read KFSSSIPQKPT and TSPTKNYTDHINQLRSGPN. Residues 144–237 adopt a coiled-coil conformation; the sequence is KQEQNLKLEN…RNERDELVKD (94 aa). Over residues 304–323 the composition is skewed to basic and acidic residues; sequence KKISEPSAAVEKDTTSEDKT. 2 disordered regions span residues 304 to 338 and 355 to 458; these read KKISEPSAAVEKDTTSEDKTPPIPNTANSSDTPRM and SSNN…STKY. Composition is skewed to polar residues over residues 355–392 and 407–425; these read SSNNKNTLSPKQAINSQTYSQPNNFSNNTVPPSQSAAY and TNFYSSSTPNTNGYNQSSQ. Residues 426–444 are compositionally biased toward basic and acidic residues; sequence SDERPETFELPHVAKDHWL. Polar residues predominate over residues 446–457; the sequence is RPTSERSTQSTK.

The protein resides in the cytoplasm. It is found in the cytoskeleton. It localises to the microtubule organizing center. Its subcellular location is the spindle pole body. Its function is as follows. Plays a role in mitotic spindle pole body organization, possibly at the point of spindle pole body separation. Required for mitotic exit. The protein is Spindle pole body protein CSA6 of Candida albicans (strain SC5314 / ATCC MYA-2876) (Yeast).